An 82-amino-acid chain; its full sequence is Putative membrane protein insertion efficiency factor (82 aa).

This sequence belongs to the UPF0161 family.

It localises to the cell membrane. Could be involved in insertion of integral membrane proteins into the membrane. This is Putative membrane protein insertion efficiency factor from Streptococcus thermophilus (strain ATCC BAA-491 / LMD-9).